Consider the following 332-residue polypeptide: Isopentenyl-diphosphate delta-isomerase (332 aa).

6–7 (RK) is a binding site for substrate. FMN-binding positions include 65 to 67 (AMT), Ser-95, and Asn-123. Residue 95-97 (SGR) coordinates substrate. Gln-157 provides a ligand contact to substrate. A Mg(2+)-binding site is contributed by Glu-158. Residues Lys-187, Thr-217, 264–266 (GVY), Ala-285, and 285–286 (AR) contribute to the FMN site.

The protein belongs to the IPP isomerase type 2 family. As to quaternary structure, homooctamer. Dimer of tetramers. FMN serves as cofactor. NADPH is required as a cofactor. It depends on Mg(2+) as a cofactor.

The protein localises to the cytoplasm. The catalysed reaction is isopentenyl diphosphate = dimethylallyl diphosphate. With respect to regulation, competitively inhibited by N,N-dimethyl-2-amino-1-ethyl diphosphate (NIPP) and isopentyl diphosphate. Involved in the biosynthesis of isoprenoids. Catalyzes the 1,3-allylic rearrangement of the homoallylic substrate isopentenyl (IPP) to its allylic isomer, dimethylallyl diphosphate (DMAPP). The sequence is that of Isopentenyl-diphosphate delta-isomerase from Thermus thermophilus (strain ATCC BAA-163 / DSM 7039 / HB27).